We begin with the raw amino-acid sequence, 224 residues long: Small ribosomal subunit protein uS5 (224 aa).

Residues 1–38 (MAEQSAGGQGAPEGRDSRDSREGRGRRDGGRGGRDSDK) form a disordered region. The segment covering 13 to 38 (EGRDSRDSREGRGRRDGGRGGRDSDK) has biased composition (basic and acidic residues). Residues 41-104 (YLERVVAINR…EEARKGFFRV (64 aa)) enclose the S5 DRBM domain.

It belongs to the universal ribosomal protein uS5 family. In terms of assembly, part of the 30S ribosomal subunit. Contacts proteins S4 and S8.

Functionally, with S4 and S12 plays an important role in translational accuracy. Its function is as follows. Located at the back of the 30S subunit body where it stabilizes the conformation of the head with respect to the body. In Mycobacterium ulcerans (strain Agy99), this protein is Small ribosomal subunit protein uS5.